Here is a 351-residue protein sequence, read N- to C-terminus: Photosystem II D2 protein 2 (351 aa).

The chain crosses the membrane as a helical span at residues 39–59 (CAFLSIGGWFTGTTFVTSWYT). Residue H116 coordinates chlorophyll a. A helical membrane pass occupies residues 123-139 (GFMLRQFEIARLVNVRP). Pheophytin a contacts are provided by Q128 and N141. Residues 151–164 (VFVSVFLMYPLGQS) form a helical membrane-spanning segment. Chlorophyll a is bound at residue H196. The helical transmembrane segment at 206-226 (GALLCAIHGATVENTLFEDTK) threads the bilayer. The a plastoquinone site is built by H213 and F260. Residue H213 coordinates Fe cation. A Fe cation-binding site is contributed by H267. Residues 277–293 (GLWASAIGLVGIALNMR) form a helical membrane-spanning segment.

This sequence belongs to the reaction center PufL/M/PsbA/D family. PSII is composed of 1 copy each of membrane proteins PsbA, PsbB, PsbC, PsbD, PsbE, PsbF, PsbH, PsbI, PsbJ, PsbK, PsbL, PsbM, PsbT, PsbX, PsbY, PsbZ, Psb30/Ycf12, peripheral proteins PsbO, CyanoQ (PsbQ), PsbU, PsbV and a large number of cofactors. It forms dimeric complexes. It depends on The D1/D2 heterodimer binds P680, chlorophylls that are the primary electron donor of PSII, and subsequent electron acceptors. It shares a non-heme iron and each subunit binds pheophytin, quinone, additional chlorophylls, carotenoids and lipids. There is also a Cl(-1) ion associated with D1 and D2, which is required for oxygen evolution. The PSII complex binds additional chlorophylls, carotenoids and specific lipids. as a cofactor.

It is found in the cellular thylakoid membrane. The enzyme catalyses 2 a plastoquinone + 4 hnu + 2 H2O = 2 a plastoquinol + O2. In terms of biological role, photosystem II (PSII) is a light-driven water:plastoquinone oxidoreductase that uses light energy to abstract electrons from H(2)O, generating O(2) and a proton gradient subsequently used for ATP formation. It consists of a core antenna complex that captures photons, and an electron transfer chain that converts photonic excitation into a charge separation. The D1/D2 (PsbA/PsbD) reaction center heterodimer binds P680, the primary electron donor of PSII as well as several subsequent electron acceptors. D2 is needed for assembly of a stable PSII complex. This Acaryochloris marina (strain MBIC 11017) protein is Photosystem II D2 protein 2.